Here is a 338-residue protein sequence, read N- to C-terminus: Large ribosomal subunit protein uL3 (338 aa).

4 disordered regions span residues 1 to 44 (MPQP…GFAG), 151 to 170 (AVPSVPKKKPDVMETRVGGG), 206 to 259 (VTKG…GQTG), and 312 to 338 (FRPAVRPNDQPRLDPEVRYVSNESNQG). Residues 22–31 (SETPRFNSWP) show a composition bias toward polar residues. Residues 220-237 (GVQKRKGKHARQGWRRRI) are compositionally biased toward basic residues. Polar residues predominate over residues 247–259 (RVRSTVPQQGQTG).

This sequence belongs to the universal ribosomal protein uL3 family. In terms of assembly, part of the 50S ribosomal subunit. Forms a cluster with proteins L14 and L24e. Interacts weakly with protein L13.

One of the primary rRNA binding proteins, it binds directly near the 3'-end of the 23S rRNA, where it nucleates assembly of the 50S subunit. This is Large ribosomal subunit protein uL3 (rpl3) from Haloarcula marismortui (strain ATCC 43049 / DSM 3752 / JCM 8966 / VKM B-1809) (Halobacterium marismortui).